Reading from the N-terminus, the 516-residue chain is Maturase K (516 aa).

This sequence belongs to the intron maturase 2 family. MatK subfamily.

Its subcellular location is the plastid. It localises to the chloroplast. Its function is as follows. Usually encoded in the trnK tRNA gene intron. Probably assists in splicing its own and other chloroplast group II introns. In Medeola virginiana (Indian cucumber root), this protein is Maturase K.